Reading from the N-terminus, the 165-residue chain is Lymphocyte antigen 6K (165 aa).

An N-terminal signal peptide occupies residues 1-17 (MALLALLLVVALPRVWT). The N-linked (GlcNAc...) asparagine glycan is linked to Asn-20. The region spanning 47-141 (ERENTFECQN…VFKEYAGSMG (95 aa)) is the UPAR/Ly6 domain. Gly-138 carries GPI-anchor amidated glycine lipidation. A propeptide spans 139 to 165 (SMGESCGGLWLAILLLLASIAAGLSLS) (removed in mature form).

Interacts with TEX101. As to expression, specifically expressed in testis (at protein level).

It is found in the secreted. It localises to the cytoplasm. The protein resides in the cell membrane. The protein localises to the cytoplasmic vesicle. Its subcellular location is the secretory vesicle. It is found in the acrosome. It localises to the membrane raft. Required for sperm migration into the oviduct and male fertility by controlling binding of sperm to zona pellucida. May play a role in cell growth. In Homo sapiens (Human), this protein is Lymphocyte antigen 6K.